We begin with the raw amino-acid sequence, 362 residues long: Alternative oxidase, mitochondrial (362 aa).

Residues 1 to 64 (MNTPKVNILY…RGFTTTSVVR (64 aa)) constitute a mitochondrion transit peptide. A helical membrane pass occupies residues 156-176 (LVRFIFLESIAGVPGMVAGML). Residues Glu-163, Glu-202, and His-205 each coordinate Fe cation. Residues 222 to 242 (LILGAQGVFFNAMFLSYLVSP) form a helical membrane-spanning segment. The Fe cation site is built by Glu-253, Glu-310, and His-313.

Belongs to the alternative oxidase family. The cofactor is Fe cation.

The protein resides in the mitochondrion inner membrane. Its function is as follows. Catalyzes cyanide-resistant oxygen consumption. May increase respiration when the cytochrome respiratory pathway is restricted, or in response to low temperatures. The protein is Alternative oxidase, mitochondrial (aod-1) of Gelasinospora sp. (strain S23).